Here is a 309-residue protein sequence, read N- to C-terminus: L-aminoadipate-semialdehyde dehydrogenase-phosphopantetheinyl transferase (309 aa).

CoA-binding positions include Arg-47, 86–91 (RTSKGK), and 108–111 (NISH). Residues Asp-129 and Glu-181 each coordinate Mg(2+). 181–185 (ESFIK) provides a ligand contact to CoA.

It belongs to the P-Pant transferase superfamily. AcpS family. Monomer. It depends on Mg(2+) as a cofactor.

The protein localises to the cytoplasm. Its subcellular location is the cytosol. It catalyses the reaction apo-[ACP] + CoA = holo-[ACP] + adenosine 3',5'-bisphosphate + H(+). The catalysed reaction is apo-[ACP] + acetyl-CoA = acetyl-[ACP] + adenosine 3',5'-bisphosphate + H(+). Its function is as follows. Catalyzes the post-translational modification of target proteins by phosphopantetheine. Can transfer the 4'-phosphopantetheine moiety from coenzyme A, regardless of whether the CoA is presented in the free thiol form or as an acetyl thioester, to a serine residue of a broad range of acceptors including the acyl carrier domain of FASN. In Rattus norvegicus (Rat), this protein is L-aminoadipate-semialdehyde dehydrogenase-phosphopantetheinyl transferase (Aasdhppt).